The primary structure comprises 446 residues: Transcriptional adapter 2-alpha (446 aa).

Residues 12-69 form a ZZ-type zinc finger; it reads FDKPPCRGCSSYLTEPYVKCAECGPPPFLLCLQCFTRGFEYKKHQSDHTYEIMTSDFP. Positions 17, 20, 31, 34, 42, 45, 55, and 59 each coordinate Zn(2+). The region spanning 70–122 is the SANT domain; sequence VLDPNWTAQEEMALLEAVMDCGFGNWQDVANQMCTKSKEECEKHYMKHFINNP. The tract at residues 345 to 375 is disordered; that stretch reads DIDSGPTPAAPIPSNSGRRSAPPLNLTGLPG. One can recognise an SWIRM domain in the interval 359-446; the sequence is NSGRRSAPPL…LIREGYITKA (88 aa). Residues 429-438 mediate DNA binding; it reads KTRKIYDFLI.

It localises to the nucleus. It is found in the chromosome. Its function is as follows. Component of some complex with histone acetyltransferase activity. Required for the function of some acidic activation domains, which activate transcription from a distant site. Binds double-stranded DNA. Binds dinucleosomes, probably at the linker region between neighboring nucleosomes. Plays a role in chromatin remodeling. The sequence is that of Transcriptional adapter 2-alpha (TADA2A) from Gallus gallus (Chicken).